The following is a 211-amino-acid chain: Ubiquitin-conjugating enzyme E2 S-C (211 aa).

In terms of domain architecture, UBC core spans 11-157; sequence HIIRRVYKEV…AKLMTEIHAQ (147 aa). Residue Cys-95 is the Glycyl thioester intermediate of the active site. The disordered stretch occupies residues 158 to 211; sequence GSTLRGKDPTDPCSSASATVVSGDGPMAKKHAGDRDKKLAAKKKTDKKRALRRL. A compositionally biased stretch (basic residues) spans 197 to 211; sequence AAKKKTDKKRALRRL.

Belongs to the ubiquitin-conjugating enzyme family.

The enzyme catalyses S-ubiquitinyl-[E1 ubiquitin-activating enzyme]-L-cysteine + [E2 ubiquitin-conjugating enzyme]-L-cysteine = [E1 ubiquitin-activating enzyme]-L-cysteine + S-ubiquitinyl-[E2 ubiquitin-conjugating enzyme]-L-cysteine.. The protein operates within protein modification; protein ubiquitination. Catalyzes the covalent attachment of ubiquitin to other proteins. Acts as an essential factor of the anaphase promoting complex/cyclosome (APC/C), a cell cycle-regulated ubiquitin ligase that controls progression through mitosis. Acts by specifically elongating 'Lys-11'-linked polyubiquitin chains initiated by the E2 enzyme ube2c/ubch10 on APC/C substrates, enhancing the degradation of APC/C substrates by the proteasome and promoting mitotic exit. The chain is Ubiquitin-conjugating enzyme E2 S-C (ube2s-c) from Xenopus laevis (African clawed frog).